We begin with the raw amino-acid sequence, 499 residues long: MEMDIDCIHHLDFSGHSTLTNTPSSDNDNYGCSWNHWSPVVNWDAFTGNQDDFHHLIDSMIDDNNTGPAFSDHTASTTSEEEEEEEATTTTMTTTTTTTTTTPEAADDDFKGLRLVHLLMAGAEALTGANKNRELARVILVRLKELVSHTDGTNMERLAAYFTEALQGLLEGAGGAYNSSSKHHVIGGPHHEPQNDALAAFQLLQDMSPYVKFGHFTANQAIVEAVAHERRVHIVDYDIMEGVQWASLMQALASNPNGPHLRITALSRSGVGRRSMATVQETGRRLTAFATSLGQPFSFHHSRLESDETFRPAGLKLVRGEALVFNCMLNLPHLTYRSPNSVASFLTAAKALRPRLVTVVEEEVGSALGGFVERFMDSLHHFSAVFDSLEAGFPMQGRARALVERVFLGPRIVGSLARIYRTGGGGEERGSWREWLRAAGFSGVAVSSANHCQSNLLLGLFNDGYRVEELGSNKLVLHWKTRRLLSASLWTCSSESDCA.

Residues 64–106 (NNTGPAFSDHTASTTSEEEEEEEATTTTMTTTTTTTTTTPEAA) form a disordered region. Low complexity predominate over residues 88–104 (TTTTMTTTTTTTTTTPE). The GRAS domain maps to 106–491 (ADDDFKGLRL…RRLLSASLWT (386 aa)). Positions 113–182 (LRLVHLLMAG…AGGAYNSSSK (70 aa)) are leucine repeat I (LRI). The tract at residues 201 to 265 (FQLLQDMSPY…PNGPHLRITA (65 aa)) is VHIID. A VHIID motif is present at residues 232 to 236 (VHIVD). Residues 281–313 (ETGRRLTAFATSLGQPFSFHHSRLESDETFRPA) are leucine repeat II (LRII). The interval 323–414 (LVFNCMLNLP…RVFLGPRIVG (92 aa)) is PFYRE. Residues 417–491 (ARIYRTGGGG…RRLLSASLWT (75 aa)) form an SAW region.

This sequence belongs to the GRAS family. In terms of assembly, interacts with IPN2. Binds to RAD1. Interacts with RAM1. In terms of tissue distribution, highly expressed in roots.

It localises to the nucleus membrane. It is found in the endoplasmic reticulum. Its function is as follows. Transcriptional regulator essential for Nod-factor-induced gene expression. Acts downstream of calcium spiking and a calcium/calmodulin-dependent protein kinase required for activation of early nodulation gene expression. Transcription factor involved in the induction of NIN and ENOD40 genes, which are required for rhizobial infection and early nodule development. Does not seem to contribute to the early steps of the arbuscular mycorrhizal fungus infection and colonization processes in roots. Transcription factor involved in the positive regulation of the beta-carotene isomerase D27, which participates in a pathway leading to biosynthesis of strigolactones in roots. In Lotus japonicus (Lotus corniculatus var. japonicus), this protein is Protein NODULATION SIGNALING PATHWAY 2.